A 544-amino-acid polypeptide reads, in one-letter code: NAD(P)H-quinone oxidoreductase chain 4 (544 aa).

14 helical membrane-spanning segments follow: residues phenylalanine 29–valine 49, tryptophan 60–glycine 80, leucine 115–phenylalanine 135, leucine 139–aspartate 159, leucine 161–tryptophan 181, phenylalanine 193–phenylalanine 213, glycine 234–valine 254, threonine 268–phenylalanine 288, phenylalanine 302–phenylalanine 322, methionine 339–leucine 359, glutamine 360–aspartate 380, methionine 400–serine 422, isoleucine 442–methionine 462, and isoleucine 488–valine 508.

It belongs to the complex I subunit 4 family.

It localises to the cellular thylakoid membrane. It carries out the reaction a plastoquinone + NADH + (n+1) H(+)(in) = a plastoquinol + NAD(+) + n H(+)(out). The catalysed reaction is a plastoquinone + NADPH + (n+1) H(+)(in) = a plastoquinol + NADP(+) + n H(+)(out). In terms of biological role, NDH-1 shuttles electrons from NAD(P)H, via FMN and iron-sulfur (Fe-S) centers, to quinones in the respiratory chain. The immediate electron acceptor for the enzyme in this species is believed to be plastoquinone. Couples the redox reaction to proton translocation (for every two electrons transferred, four hydrogen ions are translocated across the cytoplasmic membrane), and thus conserves the redox energy in a proton gradient. The polypeptide is NAD(P)H-quinone oxidoreductase chain 4 (Synechococcus sp. (strain RCC307)).